Here is a 164-residue protein sequence, read N- to C-terminus: Phosphopantetheine adenylyltransferase (164 aa).

Ser10 lines the substrate pocket. ATP-binding positions include 10–11 (SF) and His18. Positions 42, 79, and 93 each coordinate substrate. Residues 94–96 (GLR), Glu104, and 129–135 (VRPIAAT) contribute to the ATP site.

It belongs to the bacterial CoaD family. In terms of assembly, homohexamer. Mg(2+) is required as a cofactor.

The protein localises to the cytoplasm. The enzyme catalyses (R)-4'-phosphopantetheine + ATP + H(+) = 3'-dephospho-CoA + diphosphate. Its pathway is cofactor biosynthesis; coenzyme A biosynthesis; CoA from (R)-pantothenate: step 4/5. In terms of biological role, reversibly transfers an adenylyl group from ATP to 4'-phosphopantetheine, yielding dephospho-CoA (dPCoA) and pyrophosphate. This chain is Phosphopantetheine adenylyltransferase, found in Bradyrhizobium sp. (strain BTAi1 / ATCC BAA-1182).